Reading from the N-terminus, the 163-residue chain is 2-C-methyl-D-erythritol 2,4-cyclodiphosphate synthase (163 aa).

Positions 15 and 17 each coordinate a divalent metal cation. 4-CDP-2-C-methyl-D-erythritol 2-phosphate is bound by residues 15-17 and 41-42; these read DFH and HS. Residue H49 coordinates a divalent metal cation. 4-CDP-2-C-methyl-D-erythritol 2-phosphate is bound by residues 63–65 and 139–142; these read DIG and TTNE.

The protein belongs to the IspF family. As to quaternary structure, homotrimer. Requires a divalent metal cation as cofactor.

The catalysed reaction is 4-CDP-2-C-methyl-D-erythritol 2-phosphate = 2-C-methyl-D-erythritol 2,4-cyclic diphosphate + CMP. The protein operates within isoprenoid biosynthesis; isopentenyl diphosphate biosynthesis via DXP pathway; isopentenyl diphosphate from 1-deoxy-D-xylulose 5-phosphate: step 4/6. Functionally, involved in the biosynthesis of isopentenyl diphosphate (IPP) and dimethylallyl diphosphate (DMAPP), two major building blocks of isoprenoid compounds. Catalyzes the conversion of 4-diphosphocytidyl-2-C-methyl-D-erythritol 2-phosphate (CDP-ME2P) to 2-C-methyl-D-erythritol 2,4-cyclodiphosphate (ME-CPP) with a corresponding release of cytidine 5-monophosphate (CMP). The chain is 2-C-methyl-D-erythritol 2,4-cyclodiphosphate synthase from Gloeobacter violaceus (strain ATCC 29082 / PCC 7421).